Here is a 233-residue protein sequence, read N- to C-terminus: Large ribosomal subunit protein uL1 (233 aa).

Belongs to the universal ribosomal protein uL1 family. In terms of assembly, part of the 50S ribosomal subunit.

Binds directly to 23S rRNA. The L1 stalk is quite mobile in the ribosome, and is involved in E site tRNA release. In terms of biological role, protein L1 is also a translational repressor protein, it controls the translation of the L11 operon by binding to its mRNA. In Pseudoalteromonas atlantica (strain T6c / ATCC BAA-1087), this protein is Large ribosomal subunit protein uL1.